We begin with the raw amino-acid sequence, 275 residues long: Large ribosomal subunit protein uL2 (275 aa).

Disordered regions lie at residues 28 to 59 and 224 to 275; these read KPYA…GGHK and AMNP…RHKR. The span at 35–46 shows a compositional bias: polar residues; that stretch reads DTQSSTAGRNNN. A compositionally biased stretch (basic residues) spans 50–59; that stretch reads TTRHKGGGHK.

The protein belongs to the universal ribosomal protein uL2 family. In terms of assembly, part of the 50S ribosomal subunit. Forms a bridge to the 30S subunit in the 70S ribosome.

In terms of biological role, one of the primary rRNA binding proteins. Required for association of the 30S and 50S subunits to form the 70S ribosome, for tRNA binding and peptide bond formation. It has been suggested to have peptidyltransferase activity; this is somewhat controversial. Makes several contacts with the 16S rRNA in the 70S ribosome. In Paraburkholderia phymatum (strain DSM 17167 / CIP 108236 / LMG 21445 / STM815) (Burkholderia phymatum), this protein is Large ribosomal subunit protein uL2.